The sequence spans 712 residues: Elongation factor G (712 aa).

Residues 8-290 (TRYRNIGISA…AVIEFLPSPT (283 aa)) enclose the tr-type G domain. GTP contacts are provided by residues 17–24 (AHIDAGKT), 88–92 (DTPGH), and 142–145 (NKMD).

The protein belongs to the TRAFAC class translation factor GTPase superfamily. Classic translation factor GTPase family. EF-G/EF-2 subfamily.

It is found in the cytoplasm. Catalyzes the GTP-dependent ribosomal translocation step during translation elongation. During this step, the ribosome changes from the pre-translocational (PRE) to the post-translocational (POST) state as the newly formed A-site-bound peptidyl-tRNA and P-site-bound deacylated tRNA move to the P and E sites, respectively. Catalyzes the coordinated movement of the two tRNA molecules, the mRNA and conformational changes in the ribosome. This chain is Elongation factor G, found in Acinetobacter baumannii (strain AB307-0294).